We begin with the raw amino-acid sequence, 162 residues long: CASP-like protein BLE3 (162 aa).

At 1 to 7 (MAKVHRL) the chain is on the cytoplasmic side. A helical membrane pass occupies residues 8–28 (MNAVLRLAAAAAAATAAVVMV). At 29 to 50 (TSRETTSFFGIQMEAKYSYTPS) the chain is on the extracellular side. The helical transmembrane segment at 51–71 (FIFFVVAYAVAAAYSLLVLAV) threads the bilayer. Over 72 to 85 (PAGSALSRLALTTD) the chain is Cytoplasmic. The helical transmembrane segment at 86–106 (VVLGMVLAGAVASAGAISDIA) threads the bilayer. The Extracellular portion of the chain corresponds to 107-128 (KNGNSHAGWLPVCGQIHAYCNH). The chain crosses the membrane as a helical span at residues 129 to 149 (VMAALIAGFVALAVHFVVVMY). Residues 150–162 (SLHIVTDVICPCH) lie on the Cytoplasmic side of the membrane.

The protein belongs to the Casparian strip membrane proteins (CASP) family. In terms of assembly, homodimer and heterodimers.

Its subcellular location is the cell membrane. In terms of biological role, involved in cell elongation in rice through dual regulation by brassinolide and auxin. The polypeptide is CASP-like protein BLE3 (BLE3) (Oryza sativa subsp. indica (Rice)).